Consider the following 101-residue polypeptide: uncharacterized protein (101 aa).

A run of 2 helical transmembrane segments spans residues 10 to 30 (VLAI…IGSI) and 67 to 87 (IILG…ILSI).

Its subcellular location is the membrane. This is an uncharacterized protein from Acanthamoeba polyphaga (Amoeba).